A 254-amino-acid polypeptide reads, in one-letter code: Alcohol dehydrogenase (254 aa).

10-33 (FVAGLGGIGLDTSREIVKSGPKNL) lines the NAD(+) pocket. Position 138 (Ser138) interacts with substrate. The active-site Proton acceptor is Tyr151.

The protein belongs to the short-chain dehydrogenases/reductases (SDR) family. Homodimer.

It catalyses the reaction a primary alcohol + NAD(+) = an aldehyde + NADH + H(+). It carries out the reaction a secondary alcohol + NAD(+) = a ketone + NADH + H(+). The polypeptide is Alcohol dehydrogenase (Adh) (Drosophila planitibia (Fruit fly)).